Here is a 196-residue protein sequence, read N- to C-terminus: ATP synthase subunit b 2 (196 aa).

Over residues 1–18 (MVVAQAGAPAHPPAAHGA) the composition is skewed to low complexity. Residues 1–33 (MVVAQAGAPAHPPAAHGAEAGHGEAAGGEHGGF) are disordered. Residues 41–60 (FASQLIWLIVSFGALYFLMS) traverse the membrane as a helical segment.

The protein belongs to the ATPase B chain family. F-type ATPases have 2 components, F(1) - the catalytic core - and F(0) - the membrane proton channel. F(1) has five subunits: alpha(3), beta(3), gamma(1), delta(1), epsilon(1). F(0) has three main subunits: a(1), b(2) and c(10-14). The alpha and beta chains form an alternating ring which encloses part of the gamma chain. F(1) is attached to F(0) by a central stalk formed by the gamma and epsilon chains, while a peripheral stalk is formed by the delta and b chains.

Its subcellular location is the cell inner membrane. In terms of biological role, f(1)F(0) ATP synthase produces ATP from ADP in the presence of a proton or sodium gradient. F-type ATPases consist of two structural domains, F(1) containing the extramembraneous catalytic core and F(0) containing the membrane proton channel, linked together by a central stalk and a peripheral stalk. During catalysis, ATP synthesis in the catalytic domain of F(1) is coupled via a rotary mechanism of the central stalk subunits to proton translocation. Component of the F(0) channel, it forms part of the peripheral stalk, linking F(1) to F(0). The b'-subunit is a diverged and duplicated form of b found in plants and photosynthetic bacteria. The sequence is that of ATP synthase subunit b 2 (atpF2) from Azorhizobium caulinodans (strain ATCC 43989 / DSM 5975 / JCM 20966 / LMG 6465 / NBRC 14845 / NCIMB 13405 / ORS 571).